Consider the following 249-residue polypeptide: Proteasome subunit alpha (249 aa).

Belongs to the peptidase T1A family. The 20S proteasome core is composed of 14 alpha and 14 beta subunits that assemble into four stacked heptameric rings, resulting in a barrel-shaped structure. The two inner rings, each composed of seven catalytic beta subunits, are sandwiched by two outer rings, each composed of seven alpha subunits. The catalytic chamber with the active sites is on the inside of the barrel. Has a gated structure, the ends of the cylinder being occluded by the N-termini of the alpha-subunits. Is capped at one or both ends by the proteasome regulatory ATPase, PAN.

It is found in the cytoplasm. The formation of the proteasomal ATPase PAN-20S proteasome complex, via the docking of the C-termini of PAN into the intersubunit pockets in the alpha-rings, triggers opening of the gate for substrate entry. Interconversion between the open-gate and close-gate conformations leads to a dynamic regulation of the 20S proteasome proteolysis activity. Its function is as follows. Component of the proteasome core, a large protease complex with broad specificity involved in protein degradation. The polypeptide is Proteasome subunit alpha (Methanosarcina mazei (strain ATCC BAA-159 / DSM 3647 / Goe1 / Go1 / JCM 11833 / OCM 88) (Methanosarcina frisia)).